The primary structure comprises 164 residues: 6,7-dimethyl-8-ribityllumazine synthase (164 aa).

5-amino-6-(D-ribitylamino)uracil contacts are provided by residues F22, 56 to 58 (AWE), and 80 to 82 (AVI). A (2S)-2-hydroxy-3-oxobutyl phosphate-binding site is contributed by 85–86 (DT). H88 (proton donor) is an active-site residue. L113 serves as a coordination point for 5-amino-6-(D-ribitylamino)uracil. Residue R127 participates in (2S)-2-hydroxy-3-oxobutyl phosphate binding.

The protein belongs to the DMRL synthase family.

It catalyses the reaction (2S)-2-hydroxy-3-oxobutyl phosphate + 5-amino-6-(D-ribitylamino)uracil = 6,7-dimethyl-8-(1-D-ribityl)lumazine + phosphate + 2 H2O + H(+). It functions in the pathway cofactor biosynthesis; riboflavin biosynthesis; riboflavin from 2-hydroxy-3-oxobutyl phosphate and 5-amino-6-(D-ribitylamino)uracil: step 1/2. Its function is as follows. Catalyzes the formation of 6,7-dimethyl-8-ribityllumazine by condensation of 5-amino-6-(D-ribitylamino)uracil with 3,4-dihydroxy-2-butanone 4-phosphate. This is the penultimate step in the biosynthesis of riboflavin. This Gemmatimonas aurantiaca (strain DSM 14586 / JCM 11422 / NBRC 100505 / T-27) protein is 6,7-dimethyl-8-ribityllumazine synthase.